Consider the following 301-residue polypeptide: Homoserine O-acetyltransferase (301 aa).

Catalysis depends on C142, which acts as the Acyl-thioester intermediate. 2 residues coordinate substrate: K163 and S192. The active-site Proton acceptor is H235. The active site involves E237. R249 is a binding site for substrate.

This sequence belongs to the MetA family.

It localises to the cytoplasm. It catalyses the reaction L-homoserine + acetyl-CoA = O-acetyl-L-homoserine + CoA. Its pathway is amino-acid biosynthesis; L-methionine biosynthesis via de novo pathway; O-acetyl-L-homoserine from L-homoserine: step 1/1. Its function is as follows. Transfers an acetyl group from acetyl-CoA to L-homoserine, forming acetyl-L-homoserine. This Bacillus mycoides (strain KBAB4) (Bacillus weihenstephanensis) protein is Homoserine O-acetyltransferase.